The chain runs to 323 residues: Cyclin-H (323 aa).

Residue serine 5 is modified to Phosphoserine; by CDK8. Residue serine 132 is modified to Phosphoserine. Residues 297–323 form a disordered region; the sequence is YEDDDYVSKKSKHEEEEWTDDDLVESL. Residues 302-311 are compositionally biased toward basic and acidic residues; it reads YVSKKSKHEE. Residue serine 304 is modified to Phosphoserine; by CDK8. A compositionally biased stretch (acidic residues) spans 312–323; sequence EEWTDDDLVESL. Threonine 315 is modified (phosphothreonine). Serine 322 carries the phosphoserine modification.

Belongs to the cyclin family. Cyclin C subfamily. As to quaternary structure, associates primarily with CDK7 and MAT1 to form the CAK complex. CAK can further associate with the core-TFIIH to form the TFIIH basal transcription factor.

It is found in the nucleus. Its function is as follows. Regulates CDK7, the catalytic subunit of the CDK-activating kinase (CAK) enzymatic complex. CAK activates the cyclin-associated kinases CDK1, CDK2, CDK4 and CDK6 by threonine phosphorylation. CAK complexed to the core-TFIIH basal transcription factor activates RNA polymerase II by serine phosphorylation of the repetitive C-terminal domain (CTD) of its large subunit (POLR2A), allowing its escape from the promoter and elongation of the transcripts. Involved in cell cycle control and in RNA transcription by RNA polymerase II. Its expression and activity are constant throughout the cell cycle. This chain is Cyclin-H (CCNH), found in Homo sapiens (Human).